The chain runs to 360 residues: MLLWLAEYLQQYISAFAVVKYLTFRAILGVMTALGLSLLLGPWVINKLNKLQIGQSIRDDGPESHLVKSGTPTMGGTLILFAIVFATLLWSDLTNRYVLAVLFVTLSFGLVGWVDDYRKVVQKNSKGLPAKWKYFWQSLAGFTVAYGLYVTAQIPEETTLYIPFFKGVALELGVFYIILTYFMVVGFSNAVNLTDGLDGLAIMPTVMVGSALGIIAYLVGNANFSAYLQIPYVPGAGELVVYCAALAGAGLGFLWFNTYPAQVFMGDVGALALGAALGIIAVIVRHEIVFIIMSGIFVMETVSVILQVASFKLTGRRIFRMAPLHHHFELKGWPEPRVIVRFWIITVMLVLFGLATLKLR.

The next 10 membrane-spanning stretches (helical) occupy residues 26-46 (AILGVMTALGLSLLLGPWVIN), 70-90 (GTPTMGGTLILFAIVFATLLW), 97-117 (YVLAVLFVTLSFGLVGWVDDY), 134-154 (YFWQSLAGFTVAYGLYVTAQI), 167-187 (GVALELGVFYIILTYFMVVGF), 199-219 (GLAIMPTVMVGSALGIIAYLV), 236-256 (AGELVVYCAALAGAGLGFLWF), 263-283 (VFMGDVGALALGAALGIIAVI), 288-308 (IVFIIMSGIFVMETVSVILQV), and 338-358 (VIVRFWIITVMLVLFGLATLK).

It belongs to the glycosyltransferase 4 family. MraY subfamily. Mg(2+) is required as a cofactor.

It is found in the cell inner membrane. It catalyses the reaction UDP-N-acetyl-alpha-D-muramoyl-L-alanyl-gamma-D-glutamyl-meso-2,6-diaminopimeloyl-D-alanyl-D-alanine + di-trans,octa-cis-undecaprenyl phosphate = di-trans,octa-cis-undecaprenyl diphospho-N-acetyl-alpha-D-muramoyl-L-alanyl-D-glutamyl-meso-2,6-diaminopimeloyl-D-alanyl-D-alanine + UMP. The protein operates within cell wall biogenesis; peptidoglycan biosynthesis. Catalyzes the initial step of the lipid cycle reactions in the biosynthesis of the cell wall peptidoglycan: transfers peptidoglycan precursor phospho-MurNAc-pentapeptide from UDP-MurNAc-pentapeptide onto the lipid carrier undecaprenyl phosphate, yielding undecaprenyl-pyrophosphoryl-MurNAc-pentapeptide, known as lipid I. The polypeptide is Phospho-N-acetylmuramoyl-pentapeptide-transferase (Saccharophagus degradans (strain 2-40 / ATCC 43961 / DSM 17024)).